Consider the following 180-residue polypeptide: MENFFNQFFESIGEDKNREGLKETPKRVQELWKFLYKGYKEDPRVALKSAYFQGVCDEMIVAQNIEFYSTCEHHLLPFLGNISVGYIPKEKIVGISAIAKLIEIYSRRLQIQERLTIQIAETFDEIIEPRGVIVVCEAKHLCMSMQGVQKQNAIIKTSVLRGLFKKDSKTRAEFMQLLKS.

Residues C71, H74, and C142 each contribute to the Zn(2+) site.

Belongs to the GTP cyclohydrolase I family. In terms of assembly, toroid-shaped homodecamer, composed of two pentamers of five dimers.

It catalyses the reaction GTP + H2O = 7,8-dihydroneopterin 3'-triphosphate + formate + H(+). It participates in cofactor biosynthesis; 7,8-dihydroneopterin triphosphate biosynthesis; 7,8-dihydroneopterin triphosphate from GTP: step 1/1. This is GTP cyclohydrolase 1 (folE) from Helicobacter pylori (strain ATCC 700392 / 26695) (Campylobacter pylori).